Here is a 184-residue protein sequence, read N- to C-terminus: Oligoribonuclease (184 aa).

Residues 7–170 (LIWIDLEMTG…DDIRESVAEL (164 aa)) enclose the Exonuclease domain. The active site involves tyrosine 128.

Belongs to the oligoribonuclease family.

It localises to the cytoplasm. In terms of biological role, 3'-to-5' exoribonuclease specific for small oligoribonucleotides. In Baumannia cicadellinicola subsp. Homalodisca coagulata, this protein is Oligoribonuclease.